A 715-amino-acid chain; its full sequence is Phosphatidylinositol 4-phosphate 5-kinase 6 (715 aa).

The span at methionine 1–serine 13 shows a compositional bias: basic and acidic residues. Residues methionine 1 to histidine 21 are disordered. MORN repeat units follow at residues tyrosine 32–methionine 54, tyrosine 55–threonine 77, tyrosine 78–leucine 100, tyrosine 101–cysteine 123, tyrosine 124–histidine 146, tyrosine 147–arginine 169, tyrosine 170–phenylalanine 192, and tyrosine 193–serine 214. The segment at glycine 253–serine 306 is disordered. Residues serine 255–threonine 264 are compositionally biased toward polar residues. The segment covering lysine 265–aspartate 276 has biased composition (basic and acidic residues). The 391-residue stretch at threonine 321 to phenylalanine 711 folds into the PIPK domain. The tract at residues tyrosine 671–serine 692 is activation loop.

It carries out the reaction a 1,2-diacyl-sn-glycero-3-phospho-(1D-myo-inositol 4-phosphate) + ATP = a 1,2-diacyl-sn-glycero-3-phospho-(1D-myo-inositol-4,5-bisphosphate) + ADP + H(+). The chain is Phosphatidylinositol 4-phosphate 5-kinase 6 (PIP5K6) from Arabidopsis thaliana (Mouse-ear cress).